The sequence spans 161 residues: RNA pyrophosphohydrolase (161 aa).

The 144-residue stretch at 6 to 149 folds into the Nudix hydrolase domain; the sequence is GYRPNVGIIL…KKDVYRRALK (144 aa). A Nudix box motif is present at residues 38 to 59; that stretch reads GGIKSDETPEEALFRELKEEVG.

This sequence belongs to the Nudix hydrolase family. RppH subfamily. It depends on a divalent metal cation as a cofactor.

Functionally, accelerates the degradation of transcripts by removing pyrophosphate from the 5'-end of triphosphorylated RNA, leading to a more labile monophosphorylated state that can stimulate subsequent ribonuclease cleavage. This Marinomonas sp. (strain MWYL1) protein is RNA pyrophosphohydrolase.